We begin with the raw amino-acid sequence, 402 residues long: RNA-binding protein 42 (402 aa).

A disordered region spans residues 240–275 (ETASDDSVIGPSMPEPEPVHVEPVDTSTEDKKKGKQ). The segment covering 256–275 (EPVHVEPVDTSTEDKKKGKQ) has biased composition (basic and acidic residues). The RRM domain maps to 303–381 (FRIFCGDLGN…RPIKLRKSAW (79 aa)).

It belongs to the RRM RBM42 family.

The protein resides in the nucleus. It is found in the cytoplasm. Functionally, may bind RNA. The chain is RNA-binding protein 42 (rbm42) from Danio rerio (Zebrafish).